The primary structure comprises 233 residues: Orotidine 5'-phosphate decarboxylase (233 aa).

Substrate-binding positions include aspartate 13, lysine 35, 62-71, threonine 122, arginine 182, glutamine 191, glycine 211, and arginine 212; that span reads DLKFHDIPNT. Lysine 64 functions as the Proton donor in the catalytic mechanism.

Belongs to the OMP decarboxylase family. Type 1 subfamily. Homodimer.

The enzyme catalyses orotidine 5'-phosphate + H(+) = UMP + CO2. Its pathway is pyrimidine metabolism; UMP biosynthesis via de novo pathway; UMP from orotate: step 2/2. Its function is as follows. Catalyzes the decarboxylation of orotidine 5'-monophosphate (OMP) to uridine 5'-monophosphate (UMP). The chain is Orotidine 5'-phosphate decarboxylase from Pseudomonas putida (strain ATCC 47054 / DSM 6125 / CFBP 8728 / NCIMB 11950 / KT2440).